Consider the following 307-residue polypeptide: Taste receptor type 2 member 10 (307 aa).

At 1-6 (MLRVVE) the chain is on the extracellular side. The chain crosses the membrane as a helical span at residues 7–27 (GIFIFVVISEXVFGVLGNGFI). Residues 28-42 (GLVNCIDCAKNKLST) lie on the Cytoplasmic side of the membrane. Residues 43–63 (IGFILTGLAISRIFLIWIIIT) traverse the membrane as a helical segment. The Extracellular portion of the chain corresponds to 64-100 (DGFIQIFSPDIYASGNLIEYISYFWVIGNQSSMWFAT). An N-linked (GlcNAc...) asparagine glycan is attached at Asn-92. A helical transmembrane segment spans residues 101–121 (SLSIFYFLKIANFSNYIFLWL). The Cytoplasmic segment spans residues 122–126 (KSRTN). A helical membrane pass occupies residues 127–147 (MVLPFMIVFLLISSLLNFAHI). Residues 148–179 (AKILNDYKMKNDTVWDLNMYKSEYFIKQILLN) lie on the Extracellular side of the membrane. N-linked (GlcNAc...) asparagine glycosylation is present at Asn-158. A helical transmembrane segment spans residues 180–200 (LGVIFFFTLSLITCVFLIISL). At 201-227 (WRHNRQMQSNVTGLRDSNTEAHVKAMK) the chain is on the cytoplasmic side. Residues 228–248 (VLISFXILFILYFIGMAIEIS) traverse the membrane as a helical segment. The Extracellular portion of the chain corresponds to 249-257 (CFTVRENKL). A helical transmembrane segment spans residues 258 to 278 (LLMFGMTTTAIYPWGHSFILI). At 279-307 (LGNSKLKQASLRVLQQLKCCEKRKNLRVT) the chain is on the cytoplasmic side.

Belongs to the G-protein coupled receptor T2R family.

Its subcellular location is the membrane. In terms of biological role, receptor that may play a role in the perception of bitterness and is gustducin-linked. May play a role in sensing the chemical composition of the gastrointestinal content. The activity of this receptor may stimulate alpha gustducin, mediate PLC-beta-2 activation and lead to the gating of TRPM5. This Gorilla gorilla gorilla (Western lowland gorilla) protein is Taste receptor type 2 member 10 (TAS2R10).